The following is an 852-amino-acid chain: DNA double-strand break repair Rad50 ATPase (852 aa).

12 residues coordinate ATP: asparagine 32, glycine 33, alanine 34, glycine 35, lysine 36, serine 37, serine 38, arginine 53, tyrosine 54, aspartate 59, valine 61, and arginine 63. Residue serine 37 coordinates Mg(2+). Glutamine 142 is a Mg(2+) binding site. 2 coiled-coil regions span residues 155–345 (EITE…EELD) and 389–427 (LLSI…QIAS). The Zinc-hook domain maps to 389-488 (LLSIEKTENE…SLSSLIEDLL (100 aa)). Zn(2+) is bound by residues cysteine 435 and cysteine 438. Coiled-coil stretches lie at residues 460–488 (DQKR…EDLL) and 534–711 (KIEE…LFDK). Mg(2+) is bound at residue aspartate 797.

The protein belongs to the SMC family. RAD50 subfamily. In terms of assembly, homodimer. Forms a complex with Mre11. Zn(2+) serves as cofactor.

The enzyme catalyses ATP + H2O = ADP + phosphate + H(+). Functionally, involved in DNA double-strand break repair (DSBR). The Rad50/Mre11 complex possesses single-strand endonuclease activity and ATP-dependent double-strand-specific 3'-5' exonuclease activity. Rad50 provides an ATP-dependent control of Mre11 by positioning DNA ends into the Mre11 active site: ATP-binding induces a large structural change from an open form with accessible Mre11 nuclease sites into a closed form. This Thermotoga maritima (strain ATCC 43589 / DSM 3109 / JCM 10099 / NBRC 100826 / MSB8) protein is DNA double-strand break repair Rad50 ATPase.